Consider the following 314-residue polypeptide: Glutathione synthetase (314 aa).

In terms of domain architecture, ATP-grasp spans 125-311; the sequence is EKIAAQLFPQ…IAGQLFDAIE (187 aa). An ATP-binding site is contributed by 151–208; that stretch reads FVQKQEQAILKPLDGMGGHSIFRSSNGDPNLNVILETLTDGGRTLAIAQRYLQQIIEG. Mg(2+) is bound by residues glutamate 282 and asparagine 284.

Belongs to the prokaryotic GSH synthase family. Requires Mg(2+) as cofactor. Mn(2+) is required as a cofactor.

It carries out the reaction gamma-L-glutamyl-L-cysteine + glycine + ATP = glutathione + ADP + phosphate + H(+). The protein operates within sulfur metabolism; glutathione biosynthesis; glutathione from L-cysteine and L-glutamate: step 2/2. This chain is Glutathione synthetase, found in Xylella fastidiosa (strain Temecula1 / ATCC 700964).